The following is a 595-amino-acid chain: Aspartate--tRNA ligase (595 aa).

An L-aspartate-binding site is contributed by Glu-180. Residues 204–207 (QLFK) form an aspartate region. An L-aspartate-binding site is contributed by Arg-226. ATP contacts are provided by residues 226–228 (RDE) and Gln-235. Residue His-454 coordinates L-aspartate. Glu-488 is a binding site for ATP. Residue Arg-495 participates in L-aspartate binding. Residue 540–543 (GLDR) participates in ATP binding.

The protein belongs to the class-II aminoacyl-tRNA synthetase family. Type 1 subfamily. As to quaternary structure, homodimer.

Its subcellular location is the cytoplasm. It catalyses the reaction tRNA(Asp) + L-aspartate + ATP = L-aspartyl-tRNA(Asp) + AMP + diphosphate. Functionally, catalyzes the attachment of L-aspartate to tRNA(Asp) in a two-step reaction: L-aspartate is first activated by ATP to form Asp-AMP and then transferred to the acceptor end of tRNA(Asp). The protein is Aspartate--tRNA ligase of Clostridium acetobutylicum (strain ATCC 824 / DSM 792 / JCM 1419 / IAM 19013 / LMG 5710 / NBRC 13948 / NRRL B-527 / VKM B-1787 / 2291 / W).